The primary structure comprises 217 residues: High frequency lysogenization protein HflD homolog (217 aa).

This sequence belongs to the HflD family.

Its subcellular location is the cytoplasm. The protein localises to the cell membrane. The chain is High frequency lysogenization protein HflD homolog from Buchnera aphidicola subsp. Baizongia pistaciae (strain Bp).